The primary structure comprises 141 residues: Lutropin subunit beta (141 aa).

A signal peptide spans methionine 1–alanine 20. At serine 21 the chain carries Blocked amino end (Ser). 6 disulfides stabilise this stretch: cysteine 29–cysteine 77, cysteine 43–cysteine 92, cysteine 46–cysteine 130, cysteine 54–cysteine 108, cysteine 58–cysteine 110, and cysteine 113–cysteine 120. The N-linked (GlcNAc...) asparagine glycan is linked to asparagine 33.

Belongs to the glycoprotein hormones subunit beta family. In terms of assembly, heterodimer of a common alpha chain and a unique beta chain which confers biological specificity to thyrotropin, lutropin, follitropin and gonadotropin.

It is found in the secreted. In terms of biological role, promotes spermatogenesis and ovulation by stimulating the testes and ovaries to synthesize steroids. The protein is Lutropin subunit beta (LHB) of Sus scrofa (Pig).